Consider the following 714-residue polypeptide: Fatty acid oxidation complex subunit alpha (714 aa).

The segment at 1 to 190 is enoyl-CoA hydratase; sequence MEMASAFTLN…KLGLVDDVVP (190 aa). The 3-hydroxyacyl-CoA dehydrogenase stretch occupies residues 306-714; sequence APLNSVGILG…FWKTTATDLQ (409 aa).

This sequence in the N-terminal section; belongs to the enoyl-CoA hydratase/isomerase family. In the central section; belongs to the 3-hydroxyacyl-CoA dehydrogenase family. In terms of assembly, heterotetramer of two alpha chains (FadJ) and two beta chains (FadI).

It localises to the cytoplasm. The catalysed reaction is a (3S)-3-hydroxyacyl-CoA = a (2E)-enoyl-CoA + H2O. It catalyses the reaction a 4-saturated-(3S)-3-hydroxyacyl-CoA = a (3E)-enoyl-CoA + H2O. It carries out the reaction a (3S)-3-hydroxyacyl-CoA + NAD(+) = a 3-oxoacyl-CoA + NADH + H(+). The enzyme catalyses (3S)-3-hydroxybutanoyl-CoA = (3R)-3-hydroxybutanoyl-CoA. Its pathway is lipid metabolism; fatty acid beta-oxidation. Catalyzes the formation of a hydroxyacyl-CoA by addition of water on enoyl-CoA. Also exhibits 3-hydroxyacyl-CoA epimerase and 3-hydroxyacyl-CoA dehydrogenase activities. In Escherichia coli O81 (strain ED1a), this protein is Fatty acid oxidation complex subunit alpha.